The primary structure comprises 436 residues: GTPase Obg (436 aa).

The 159-residue stretch at 2-160 (SMFLDTAKIQ…RELLLELKVL (159 aa)) folds into the Obg domain. Residues 161–338 (ADVGLVGFPS…LLDATAELLD (178 aa)) form the OBG-type G domain. Residues 167 to 174 (GFPSVGKS), 192 to 196 (FTTIV), 214 to 217 (DLPG), 284 to 287 (NKMD), and 319 to 321 (SSL) each bind GTP. Mg(2+) is bound by residues serine 174 and threonine 194. Residues 358–436 (GFDEEAPAFE…IGKFEFEFVD (79 aa)) form the OCT domain.

The protein belongs to the TRAFAC class OBG-HflX-like GTPase superfamily. OBG GTPase family. Monomer. It depends on Mg(2+) as a cofactor.

It is found in the cytoplasm. In terms of biological role, an essential GTPase which binds GTP, GDP and possibly (p)ppGpp with moderate affinity, with high nucleotide exchange rates and a fairly low GTP hydrolysis rate. Plays a role in control of the cell cycle, stress response, ribosome biogenesis and in those bacteria that undergo differentiation, in morphogenesis control. This is GTPase Obg from Streptococcus gordonii (strain Challis / ATCC 35105 / BCRC 15272 / CH1 / DL1 / V288).